Here is a 177-residue protein sequence, read N- to C-terminus: B-phycoerythrin beta chain (177 aa).

(2R,3E)-phycoerythrobilin contacts are provided by residues lysine 28, asparagine 35, aspartate 39, cysteine 50, aspartate 54, cysteine 61, asparagine 72, 77–78, cysteine 82, arginine 129, 147–148, 154–158, and cysteine 158; these read RR, SQ, and PQGDC. The residue at position 72 (asparagine 72) is an N4-methylasparagine.

It belongs to the phycobiliprotein family. In terms of assembly, heterotetramer of 2 different alpha chains and 2 identical beta chains. The subunit composition could comprise any combination of 2 out of 4 different alpha units with an invariant beta unit. Post-translationally, contains three covalently linked phycoerythrobilin chromophores.

It localises to the plastid. The protein resides in the chloroplast thylakoid membrane. In terms of biological role, light-harvesting photosynthetic tetrapyrrole chromophore-protein from the phycobiliprotein complex. The polypeptide is B-phycoerythrin beta chain (cpeB) (Rhodomonas sp. (strain CS 24) (Chroomonas sp. (strain CS24))).